A 577-amino-acid polypeptide reads, in one-letter code: AP-1-like transcription factor napA (577 aa).

A disordered region spans residues 25 to 178 (ALSSNNPPSK…RAFRERKEKH (154 aa)). Over residues 26 to 64 (LSSNNPPSKQKQNVQKPELGTNPTNTPGQASTGSFNTSP) the composition is skewed to polar residues. Basic and acidic residues-rich tracts occupy residues 109 to 121 (SDDHEVGEKRKDS) and 133 to 144 (RESDDKSDDKTS). Short sequence motifs (bipartite nuclear localization signal) lie at residues 117–124 (KRKDSNSN) and 144–151 (SKKPGRKP). Residues 154-217 (SEPTSKRKAQ…ERLQVELREY (64 aa)) enclose the bZIP domain. Residues 159–180 (KRKAQNRAAQRAFRERKEKHLK) form a basic motif region. Residues 182–189 (LEAKVEEL) are leucine-zipper. The segment at 294 to 386 (QAANGRASSS…NQAKESHEGH (93 aa)) is disordered. The span at 299 to 319 (RASSSASPKTVTSNNPATKSP) shows a compositional bias: polar residues. Low complexity predominate over residues 347-364 (TSDSPSSSSDSHQFLSSS). Over residues 365–377 (GTSPEPSVQSPDN) the composition is skewed to polar residues. Residues 525–558 (CTKIWDRLQSMEKFRNGEIDVDNLCSELRTKARC) are c-CRD. Residues 543 to 550 (IDVDNLCS) carry the Nuclear export signal motif.

It belongs to the bZIP family. YAP subfamily. In terms of processing, oxidative stress induces conformational changes through oxidation of cysteine residues, masking the nuclear export signal, thus abolishing nuclear export by CRM1/exportin 1.

The protein resides in the nucleus. Its subcellular location is the cytoplasm. Functionally, transcription activator involved in oxidative stress response, specifically during hyphal growth. Regulates the transcription of genes encoding antioxidant enzymes and components of the cellular thiol-reducing pathways including the mycelium-specific catalase catB (but not the conidia-specific catalase catA), thioredoxin reductase trxB and thioredoxin thiO. Preferentially binds to promoters with the core binding site 5'-TTA[CG]TAA-3'. Activity of the transcription factor is controlled through oxidation of specific cysteine residues resulting in the alteration of its subcellular location. Activation by hydroperoxides induces nuclear accumulation and as a result NapA transcriptional activity. The chain is AP-1-like transcription factor napA from Emericella nidulans (strain FGSC A4 / ATCC 38163 / CBS 112.46 / NRRL 194 / M139) (Aspergillus nidulans).